A 505-amino-acid chain; its full sequence is Maturase K (505 aa).

This sequence belongs to the intron maturase 2 family. MatK subfamily.

It localises to the plastid. The protein resides in the chloroplast. Functionally, usually encoded in the trnK tRNA gene intron. Probably assists in splicing its own and other chloroplast group II introns. This chain is Maturase K, found in Calycanthus floridus (Eastern sweetshrub).